Reading from the N-terminus, the 1401-residue chain is Kinesin-like protein KIF27 (1401 aa).

The 337-residue stretch at 5-341 folds into the Kinesin motor domain; it reads PVKVAVRIRP…LKYANRARNI (337 aa). Residue 84–91 participates in ATP binding; the sequence is GQTGSGKT. Coiled coils occupy residues 352–413 and 489–557; these read ESDR…GYQC and LAAD…KLNL. 5 positions are modified to phosphoserine: Ser643, Ser646, Ser672, Ser675, and Ser704. Positions 643-662 are disordered; it reads SDNSDDEESEGQEKSGTRCR. Coiled coils occupy residues 705–886, 916–1070, 1118–1154, and 1190–1219; these read QELN…IQLK, DHLQ…AAIE, NKVVNLREAERKQQLYNEEMKMKVLERDNMVRELESA, and EGIMETFKTYEDKIQQLEKDLYFYKKTSRD. Ser999 carries the phosphoserine modification. Basic and acidic residues predominate over residues 1259-1280; the sequence is EELKWASRPESMKLSGREREMD. Residues 1259–1332 are disordered; it reads EELKWASRPE…TETDDNQFTK (74 aa). The segment covering 1281–1292 has biased composition (polar residues); it reads SSASSLRTQPNP. Ser1367 and Ser1389 each carry phosphoserine.

The protein belongs to the TRAFAC class myosin-kinesin ATPase superfamily. Kinesin family. KIF27 subfamily. In terms of assembly, interacts with STK36. In terms of tissue distribution, testis, pancreatic islet, germ cell tumors and Jurkat T-cells.

It is found in the cytoplasm. The protein localises to the cytoskeleton. Its subcellular location is the cell projection. The protein resides in the cilium. Functionally, plays an essential role in motile ciliogenesis. The chain is Kinesin-like protein KIF27 (KIF27) from Homo sapiens (Human).